We begin with the raw amino-acid sequence, 244 residues long: ATP synthase subunit a (244 aa).

A run of 7 helical transmembrane segments spans residues 17–37 (LSNV…AVLT), 74–94 (PFLA…MLGL), 112–132 (DPAI…YYGV), 148–168 (IPLL…TLGL), 171–191 (YGNI…ATNF), 196–216 (IALG…WQAF), and 217–237 (SLFV…VYIS).

It belongs to the ATPase A chain family. F-type ATPases have 2 components, CF(1) - the catalytic core - and CF(0) - the membrane proton channel. CF(1) has five subunits: alpha(3), beta(3), gamma(1), delta(1), epsilon(1). CF(0) has three main subunits: a(1), b(2) and c(9-12). The alpha and beta chains form an alternating ring which encloses part of the gamma chain. CF(1) is attached to CF(0) by a central stalk formed by the gamma and epsilon chains, while a peripheral stalk is formed by the delta and b chains.

It localises to the cell membrane. Its function is as follows. Key component of the proton channel; it plays a direct role in the translocation of protons across the membrane. The sequence is that of ATP synthase subunit a from Bacillus pumilus (strain SAFR-032).